The chain runs to 156 residues: ATP synthase subunit b 2 (156 aa).

Residues 11–31 (LLAFIFFVWFCMKFVWPPIMG) traverse the membrane as a helical segment.

This sequence belongs to the ATPase B chain family. As to quaternary structure, F-type ATPases have 2 components, F(1) - the catalytic core - and F(0) - the membrane proton channel. F(1) has five subunits: alpha(3), beta(3), gamma(1), delta(1), epsilon(1). F(0) has three main subunits: a(1), b(2) and c(10-14). The alpha and beta chains form an alternating ring which encloses part of the gamma chain. F(1) is attached to F(0) by a central stalk formed by the gamma and epsilon chains, while a peripheral stalk is formed by the delta and b chains.

The protein localises to the cell inner membrane. F(1)F(0) ATP synthase produces ATP from ADP in the presence of a proton or sodium gradient. F-type ATPases consist of two structural domains, F(1) containing the extramembraneous catalytic core and F(0) containing the membrane proton channel, linked together by a central stalk and a peripheral stalk. During catalysis, ATP synthesis in the catalytic domain of F(1) is coupled via a rotary mechanism of the central stalk subunits to proton translocation. In terms of biological role, component of the F(0) channel, it forms part of the peripheral stalk, linking F(1) to F(0). The protein is ATP synthase subunit b 2 of Pseudoalteromonas atlantica (strain T6c / ATCC BAA-1087).